The primary structure comprises 103 residues: Large ribosomal subunit protein uL24 (103 aa).

Belongs to the universal ribosomal protein uL24 family. Part of the 50S ribosomal subunit.

In terms of biological role, one of two assembly initiator proteins, it binds directly to the 5'-end of the 23S rRNA, where it nucleates assembly of the 50S subunit. Its function is as follows. One of the proteins that surrounds the polypeptide exit tunnel on the outside of the subunit. In Bacillus mycoides (strain KBAB4) (Bacillus weihenstephanensis), this protein is Large ribosomal subunit protein uL24.